The following is a 196-amino-acid chain: Carnitine operon protein CaiE (196 aa).

The disordered stretch occupies residues 177–196 (RQMEENRPRLQGTTDVMPKR).

This sequence belongs to the transferase hexapeptide repeat family.

It functions in the pathway amine and polyamine metabolism; carnitine metabolism. Overproduction of CaiE stimulates the activity of CaiB and CaiD. This is Carnitine operon protein CaiE from Escherichia coli O17:K52:H18 (strain UMN026 / ExPEC).